The primary structure comprises 309 residues: Tagatose-6-phosphate kinase (309 aa).

The protein belongs to the carbohydrate kinase PfkB family. LacC subfamily.

The enzyme catalyses D-tagatofuranose 6-phosphate + ATP = D-tagatofuranose 1,6-bisphosphate + ADP + H(+). Its pathway is carbohydrate metabolism; D-tagatose 6-phosphate degradation; D-glyceraldehyde 3-phosphate and glycerone phosphate from D-tagatose 6-phosphate: step 1/2. This is Tagatose-6-phosphate kinase from Streptococcus pyogenes serotype M12 (strain MGAS2096).